We begin with the raw amino-acid sequence, 104 residues long: Large ribosomal subunit protein uL24 (104 aa).

The protein belongs to the universal ribosomal protein uL24 family. As to quaternary structure, part of the 50S ribosomal subunit.

In terms of biological role, one of two assembly initiator proteins, it binds directly to the 5'-end of the 23S rRNA, where it nucleates assembly of the 50S subunit. One of the proteins that surrounds the polypeptide exit tunnel on the outside of the subunit. This chain is Large ribosomal subunit protein uL24, found in Bartonella bacilliformis (strain ATCC 35685 / KC583 / Herrer 020/F12,63).